We begin with the raw amino-acid sequence, 127 residues long: uncharacterized protein (127 aa).

A helical membrane pass occupies residues 84–103 (IALLSLFISLSIRITCFPFF).

Its subcellular location is the membrane. This is an uncharacterized protein from Saccharomyces cerevisiae (strain ATCC 204508 / S288c) (Baker's yeast).